The sequence spans 58 residues: Curromycin resistance protein (58 aa).

Positions 1-37 are disordered; the sequence is MSVVALGATSITPPHGPESQGRPFPARGPVRPSARAR. Positions 25–37 are enriched in low complexity; sequence PARGPVRPSARAR.

The sequence is that of Curromycin resistance protein (cre) from Streptomyces hygroscopicus.